Consider the following 436-residue polypeptide: GTPase Der (436 aa).

EngA-type G domains lie at 4–167 and 175–351; these read PIVA…PDEA and IRFS…DNHR. Residues 10-17, 57-61, 119-122, 181-188, 229-233, and 294-297 contribute to the GTP site; these read GRPNVGKS, DTGGI, NKVD, DTAGM, and NKWD. The KH-like domain occupies 352–436; that stretch reads KRITSSTLND…PIKLIVRARK (85 aa).

The protein belongs to the TRAFAC class TrmE-Era-EngA-EngB-Septin-like GTPase superfamily. EngA (Der) GTPase family. As to quaternary structure, associates with the 50S ribosomal subunit.

Its function is as follows. GTPase that plays an essential role in the late steps of ribosome biogenesis. In Leuconostoc mesenteroides subsp. mesenteroides (strain ATCC 8293 / DSM 20343 / BCRC 11652 / CCM 1803 / JCM 6124 / NCDO 523 / NBRC 100496 / NCIMB 8023 / NCTC 12954 / NRRL B-1118 / 37Y), this protein is GTPase Der.